We begin with the raw amino-acid sequence, 202 residues long: GTP cyclohydrolase 1 (202 aa).

The Zn(2+) site is built by Cys-90, His-93, and Cys-163.

This sequence belongs to the GTP cyclohydrolase I family. As to quaternary structure, homomer.

The enzyme catalyses GTP + H2O = 7,8-dihydroneopterin 3'-triphosphate + formate + H(+). It participates in cofactor biosynthesis; 7,8-dihydroneopterin triphosphate biosynthesis; 7,8-dihydroneopterin triphosphate from GTP: step 1/1. The polypeptide is GTP cyclohydrolase 1 (Mycobacterium ulcerans (strain Agy99)).